Consider the following 379-residue polypeptide: Homoserine O-succinyltransferase (379 aa).

The region spanning 51–360 (NAVLICHALS…DAPQGHDAFL (310 aa)) is the AB hydrolase-1 domain. Ser-157 acts as the Nucleophile in catalysis. Arg-227 is a substrate binding site. Catalysis depends on residues Asp-323 and His-356. Asp-357 lines the substrate pocket.

Belongs to the AB hydrolase superfamily. MetX family. As to quaternary structure, homodimer.

The protein localises to the cytoplasm. It carries out the reaction L-homoserine + succinyl-CoA = O-succinyl-L-homoserine + CoA. It participates in amino-acid biosynthesis; L-methionine biosynthesis via de novo pathway; O-succinyl-L-homoserine from L-homoserine: step 1/1. Functionally, transfers a succinyl group from succinyl-CoA to L-homoserine, forming succinyl-L-homoserine. This chain is Homoserine O-succinyltransferase, found in Pseudomonas savastanoi pv. phaseolicola (strain 1448A / Race 6) (Pseudomonas syringae pv. phaseolicola (strain 1448A / Race 6)).